The following is a 233-amino-acid chain: TATA-box-binding protein 1 (233 aa).

Tandem repeats lie at residues 58–134 and 148–225.

The protein belongs to the TBP family. As to quaternary structure, belongs to the TFIID complex together with the TBP-associated factors (TAFs). Binds DNA as monomer.

Its subcellular location is the nucleus. Functionally, general transcription factor that functions at the core of the DNA-binding multiprotein factor TFIID. Binding of TFIID to the TATA box is the initial transcriptional step of the pre-initiation complex (PIC), playing a role in the activation of eukaryotic genes transcribed by RNA polymerase II. This chain is TATA-box-binding protein 1 (TBP1), found in Triticum aestivum (Wheat).